The chain runs to 428 residues: MKLIKYPDRSQWNEILKRPVLETENLFDTVRNIINRVRAGGDRVVMECEAVFDKAELTSLAVTSAEIEEAEKEVPIELKAAIYLAKRNIETFHSAQRFEGKKVDTMEGVTCWQKAVAIEKVGLYIPGGTAPLFSTVLMLAIPAKIAGCKEIVLCTPPDKNGKVHPAILFAARLAGVSKIFKVGGVQAIAAMAYGTESIPKVYKIFGPGNQYVTAAKQLVSLRDVAIDMPAGPSEVEVLADESANPVFVAADLLSQAEHGVDSQAMLVTTSEKLQTEVVYEVERQLGYLTRRDIAEKSLANSKLILVKDMEEALELTNAYAPEHLIIETKDYMEVAGQIVNAGSVFLGAFSPESAGDYASGTNHTLPTNGYAKAYSGVSLDSFIRKITFQEILPSGMSAIGPAIEVMAANEHLDAHKNAVTVRLEEIRK.

NAD(+) is bound by residues Tyr124, Gln186, and Asn209. Substrate-binding residues include Ser233, Gln255, and His258. Zn(2+) contacts are provided by Gln255 and His258. Residues Glu322 and His323 each act as proton acceptor in the active site. Positions 323, 356, 410, and 415 each coordinate substrate. Asp356 is a binding site for Zn(2+). His415 contacts Zn(2+).

It belongs to the histidinol dehydrogenase family. The cofactor is Zn(2+).

The catalysed reaction is L-histidinol + 2 NAD(+) + H2O = L-histidine + 2 NADH + 3 H(+). Its pathway is amino-acid biosynthesis; L-histidine biosynthesis; L-histidine from 5-phospho-alpha-D-ribose 1-diphosphate: step 9/9. Its function is as follows. Catalyzes the sequential NAD-dependent oxidations of L-histidinol to L-histidinaldehyde and then to L-histidine. The polypeptide is Histidinol dehydrogenase (Bacteroides fragilis (strain YCH46)).